The sequence spans 202 residues: Holliday junction branch migration complex subunit RuvA (202 aa).

Positions 1-63 (MIEYLKGAIV…EDAHLLYGFS (63 aa)) are domain I. A domain II region spans residues 64–142 (TKEERTLFGQ…LETSSDEILS (79 aa)). The tract at residues 143–153 (ARTAVGDAALN) is flexible linker. The domain III stretch occupies residues 153–202 (NTIASGEEAISALKMLGFADPAIRKAVKSILSEDSSLAVEDIIKRALRML).

It belongs to the RuvA family. In terms of assembly, homotetramer. Forms an RuvA(8)-RuvB(12)-Holliday junction (HJ) complex. HJ DNA is sandwiched between 2 RuvA tetramers; dsDNA enters through RuvA and exits via RuvB. An RuvB hexamer assembles on each DNA strand where it exits the tetramer. Each RuvB hexamer is contacted by two RuvA subunits (via domain III) on 2 adjacent RuvB subunits; this complex drives branch migration. In the full resolvosome a probable DNA-RuvA(4)-RuvB(12)-RuvC(2) complex forms which resolves the HJ.

It localises to the cytoplasm. Its function is as follows. The RuvA-RuvB-RuvC complex processes Holliday junction (HJ) DNA during genetic recombination and DNA repair, while the RuvA-RuvB complex plays an important role in the rescue of blocked DNA replication forks via replication fork reversal (RFR). RuvA specifically binds to HJ cruciform DNA, conferring on it an open structure. The RuvB hexamer acts as an ATP-dependent pump, pulling dsDNA into and through the RuvAB complex. HJ branch migration allows RuvC to scan DNA until it finds its consensus sequence, where it cleaves and resolves the cruciform DNA. The chain is Holliday junction branch migration complex subunit RuvA from Porphyromonas gingivalis (strain ATCC BAA-308 / W83).